The following is a 212-amino-acid chain: CRIB domain-containing protein RIC6 (212 aa).

The CRIB domain occupies 34-47; it reads IGNPTDVKHVAHIG. The segment at 51-212 is disordered; that stretch reads PSANATAPSW…MPQFDNRDDF (162 aa). Positions 53 to 65 are enriched in polar residues; it reads ANATAPSWMTEFN. The segment covering 106–121 has biased composition (basic and acidic residues); that stretch reads AASEKGSPTKDKSSDK. A compositionally biased stretch (polar residues) spans 192-202; sequence EYMSETGSVRS.

As to quaternary structure, interacts with ARAC11/ROP1. Expressed in flowers and pollen.

It is found in the cell membrane. Functions as a downstream effector of Rho-related GTP binding proteins of the 'Rho of Plants' (ROPs) family. Participates in the propagation of ROP GTPase signals in specific cellular responses. Is involved in pollen tube growth regulation through its interaction with ARAC11/ROP1. The protein is CRIB domain-containing protein RIC6 (RIC6) of Arabidopsis thaliana (Mouse-ear cress).